The chain runs to 129 residues: Natriuretic peptides B (129 aa).

The N-terminal stretch at 1–26 (MDPQKALSRTLLLLLFLHLSLLGCRS) is a signal peptide. Cys-107 and Cys-123 form a disulfide bridge.

The protein belongs to the natriuretic peptide family. Post-translationally, the precursor molecule is proteolytically cleaved, possibly by FURIN or CORIN, to produce the active peptide. May undergo further proteolytic cleavage by various proteases such as DPP4, MME and possibly FAP, to give rise to a variety of shorter peptides. May be cleaved at Pro-99 by the prolyl endopeptidase FAP (seprase) activity (in vitro). May be degraded by IDE. During IDE degradation, the resulting products initially increase the activation of NPR1 and can also stimulate NPR2 to produce cGMP before the fragments are completely degraded and inactivated by IDE (in vitro).

The protein resides in the secreted. Cardiac hormone that plays a key role in mediating cardio-renal homeostasis. May also function as a paracrine antifibrotic factor in the heart. Acts by specifically binding and stimulating NPR1 to produce cGMP, which in turn activates effector proteins that drive various biological responses. Involved in regulating the extracellular fluid volume and maintaining the fluid-electrolyte balance through natriuresis, diuresis, vasorelaxation, and inhibition of renin and aldosterone secretion. Binds the clearance receptor NPR3. The protein is Natriuretic peptides B (NPPB) of Ovis aries (Sheep).